The following is a 62-amino-acid chain: Small ribosomal subunit protein eS17 (62 aa).

It belongs to the eukaryotic ribosomal protein eS17 family.

This chain is Small ribosomal subunit protein eS17, found in Methanocaldococcus jannaschii (strain ATCC 43067 / DSM 2661 / JAL-1 / JCM 10045 / NBRC 100440) (Methanococcus jannaschii).